The primary structure comprises 98 residues: Large ribosomal subunit protein eL21 (98 aa).

Positions M1–E22 are disordered. Residues R10 to R21 show a composition bias toward basic residues.

It belongs to the eukaryotic ribosomal protein eL21 family.

This is Large ribosomal subunit protein eL21 (rpl21e) from Methanocaldococcus jannaschii (strain ATCC 43067 / DSM 2661 / JAL-1 / JCM 10045 / NBRC 100440) (Methanococcus jannaschii).